A 374-amino-acid polypeptide reads, in one-letter code: MPTFRSNIVVFNLIARRAFTTTSTKNMGFVEKVRLLDYWKIQDSALQSEFPRSRLVLMVDRRLLVTKDQPDVQMVELSFDDLKQRLGEYGLQFDLSNSCLLDALSTDVDMIPLFGTSIDAADPPEDSPISKKEVLKQLGNSLGGRFTDIRMAMLTMREERQRNLLAKFQSLTKWASIYRRCPKCAAALKMRSSKSGAECVTCQRVYYPTFSPVSITLITDPTNEHALLVRHRGSAGGVFTAVAGFAHSGESMAECARREIAEEVGIEVDSIRSLDMSQPWPMPDSSLMIAHVAVAKIDQKISVCPDELETAQWFTRHQVKEALTTTLADPLLKNLPRTLDDRQTLHYIPPAGAIAHQMIRQWVDGKLENHNSRI.

Residues cysteine 181, cysteine 184, cysteine 199, and cysteine 202 each contribute to the Zn(2+) site. Residues tyrosine 207, 243–245 (AGF), glutamate 259, glutamate 263, and glutamate 307 contribute to the substrate site. The 129-residue stretch at 208-336 (PTFSPVSITL…LADPLLKNLP (129 aa)) folds into the Nudix hydrolase domain. Positions 243, 259, 263, and 307 each coordinate Mg(2+). The short motif at 244–265 (GFAHSGESMAECARREIAEEVG) is the Nudix box element. The Microbody targeting signal signature appears at 367 to 369 (LEN).

The protein belongs to the Nudix hydrolase family. NudC subfamily. As to quaternary structure, homodimer. The cofactor is Mg(2+). Mn(2+) serves as cofactor. Zn(2+) is required as a cofactor.

It catalyses the reaction a 5'-end NAD(+)-phospho-ribonucleoside in mRNA + H2O = a 5'-end phospho-adenosine-phospho-ribonucleoside in mRNA + beta-nicotinamide D-ribonucleotide + 2 H(+). The catalysed reaction is NAD(+) + H2O = beta-nicotinamide D-ribonucleotide + AMP + 2 H(+). It carries out the reaction NADH + H2O = reduced beta-nicotinamide D-ribonucleotide + AMP + 2 H(+). Functionally, mRNA decapping enzyme that specifically removes the nicotinamide adenine dinucleotide (NAD) cap from a subset of mRNAs by hydrolyzing the diphosphate linkage to produce nicotinamide mononucleotide (NMN) and 5' monophosphate mRNA. The NAD-cap is present at the 5'-end of some RNAs; in contrast to the canonical N7 methylguanosine (m7G) cap, the NAD cap promotes mRNA decay. Mediates the hydrolysis of some nucleoside diphosphate derivatives. This chain is NAD-capped RNA hydrolase ndx-9 (ndx-9), found in Caenorhabditis elegans.